Consider the following 955-residue polypeptide: MVEVMKFTKNKIAALLSLTLLGVYGCGSTPSSSDAEGAVEDVGGTIPDFESAAFFKKVKKDHRKAEVVSDQGVTSGSSALKVNFDSVSEANKFKYWPNVKVHPDSGFWNWNAKGSLSLDITNPTDSPANIILKLADNVGVMGSGDNQLNYAVNVPAGETVPVEMLFNGTKRKLDGYWGGEKINLRNIVEFQIFVQGPMDAQTVIIDNFNLVDATGDFIEASGQEVKVSGPIPTVASITSFDEGQPTFVAFDRSAAATVTELKTDMGGLLAVKLAATNAYPNITFKAPQPWDWSEYGDFSLAFDLESKADEPLQLFVRVDDAENENWGGTANGVVDSMSSYVTLAPGDDGTFYLPLGQTGSQIVSGMRAEPPKKSYNAQAISYGWGEKSLDTSNIVSFQLYLQNPTKDAEFNIKSVRLIPNIDADATRYEGLIDQYGQFTGSEWPKKITEDEELETMGKLAKMSLKSTSQMPGRSIYGGWADGPKLKGTGFFRTEKVDGKWSLVDPQGNLFFATGVDNIRMDDTVTITGHDFADKDKRSGKEVASEVRRSMFTWLPEDDDVLAENYDYANWVHSGALKKGEVFSFYGANLQRKYGGTFSEAEKVWKDITIDRMVDWGFTTLGNWADPMFYDNKKVAYVANGWIFGDHARISTGNDYWGPIHDPFDPEFVNSVKAMTKKLMTEVDKNDPWMMGVFVDNEISWGNTKNDANHYGLVVNALSYDMKKSPAKAAFTEHLKEKYWAIEDLNTSWGVKVASWAEFEKSFDHRSRLSKNMKKDYAEMLEMLSAKYFSTVRAELKKVLPNHLYLGAPFADWGVTPEIAKGAAPYVDVMSYNLYAEDLNSKGDWSKLAELDKPSIIGEFHFGSTDSGLFHGGIVSAASQQDRAKKYTNYMNSIADNPYFVGAHWFQYIDSPTTGRAWDGENYNVGFVSITDTPYVPLVEAAKKFNQDVYMLRYKK.

Belongs to the glycosyl hydrolase 50 family.

The catalysed reaction is Hydrolysis of (1-&gt;4)-beta-D-galactosidic linkages in agarose, giving the tetramer as the predominant product.. Functionally, hydrolyzes agarose to yield predominantly neoagarotetraose and neoagarohexaose. The sequence is that of Beta-agarase B (agaB) from Vibrio sp. (strain JT0107).